Reading from the N-terminus, the 3118-residue chain is Laminin subunit alpha-2 (3118 aa).

A signal peptide spans 1-19 (MPAATAGILLLLLLGTLEG). One can recognise a Laminin N-terminal domain in the interval 31-282 (QQRGLFPAVL…SVKDISVGGM (252 aa)). N-linked (GlcNAc...) asparagine glycans are attached at residues Asn51 and Asn85. Disulfide bonds link Cys283–Cys292, Cys285–Cys303, Cys305–Cys314, Cys317–Cys337, Cys340–Cys349, and Cys342–Cys374. 4 consecutive Laminin EGF-like domains span residues 283 to 339 (CICY…ECEA), 340 to 409 (CNCH…PCQP), 410 to 464 (CHCD…DCQP), and 465 to 513 (CNCS…GCEE). Asn299 is a glycosylation site (N-linked (GlcNAc...) asparagine). N-linked (GlcNAc...) asparagine glycosylation is found at Asn359 and Asn376. Cystine bridges form between Cys377–Cys386, Cys389–Cys407, Cys410–Cys422, Cys412–Cys438, Cys440–Cys449, Cys452–Cys462, Cys465–Cys478, Cys467–Cys482, Cys484–Cys493, and Cys496–Cys511. Residue Asn466 is glycosylated (N-linked (GlcNAc...) asparagine). Residues 514–523 (CFCSGVSNRC) enclose the Laminin EGF-like 5; first part domain. Residues 527 to 719 (YWTYGNIQDM…DRRIATDVEV (193 aa)) enclose the Laminin IV type A 1 domain. Residues 720 to 752 (CQCPPGYSGSSCETCWPRHRRVNGTIFGGICEP) enclose the Laminin EGF-like 5; second part domain. An N-linked (GlcNAc...) asparagine glycan is attached at Asn742. Intrachain disulfides connect Cys753–Cys762, Cys755–Cys769, Cys772–Cys781, Cys784–Cys800, Cys803–Cys818, Cys805–Cys828, Cys831–Cys840, Cys843–Cys858, Cys861–Cys875, Cys863–Cys882, Cys885–Cys894, Cys897–Cys911, Cys914–Cys926, Cys916–Cys933, Cys935–Cys944, Cys947–Cys960, Cys963–Cys975, Cys965–Cys981, Cys983–Cys992, Cys995–Cys1007, Cys1010–Cys1019, Cys1012–Cys1026, Cys1028–Cys1037, Cys1040–Cys1053, Cys1056–Cys1068, Cys1058–Cys1075, Cys1077–Cys1086, Cys1089–Cys1099, Cys1102–Cys1114, Cys1104–Cys1130, Cys1132–Cys1141, and Cys1144–Cys1159. Laminin EGF-like domains lie at 753 to 802 (CQCF…DCQP), 803 to 860 (CACP…SCQP), 861 to 913 (CQCN…NCQP), 914 to 962 (CRCN…GCLP), 963 to 1009 (CNCN…GCIA), 1010 to 1055 (CDCS…GCKV), 1056 to 1101 (CNCS…LCTL), and 1102 to 1161 (CDCF…GCSS). The N-linked (GlcNAc...) asparagine glycan is linked to Asn919. N-linked (GlcNAc...) asparagine glycosylation occurs at Asn1031. Residue Asn1057 is glycosylated (N-linked (GlcNAc...) asparagine). Residues 1162 to 1171 (CYCFGVTSQC) enclose the Laminin EGF-like 14; first part domain. Positions 1172-1375 (SEAKGLIRTW…GSPPAHLIER (204 aa)) constitute a Laminin IV type A 2 domain. Residues 1376-1415 (CDCPPGYSGLSCETCAPGFYRLRSEPGGRTPGPTLGTCVP) form the Laminin EGF-like 14; second part domain. Intrachain disulfides connect Cys1378–Cys1387, Cys1416–Cys1425, Cys1418–Cys1432, Cys1435–Cys1444, Cys1447–Cys1462, Cys1465–Cys1480, Cys1467–Cys1490, Cys1493–Cys1502, Cys1505–Cys1520, Cys1523–Cys1535, Cys1525–Cys1542, Cys1544–Cys1553, and Cys1556–Cys1567. 3 consecutive Laminin EGF-like domains span residues 1416–1464 (CQCN…DCQP), 1465–1522 (CACP…SCQE), and 1523–1569 (CECD…ECVF). The segment at 1570–2140 (CGDECTGLLL…NQARKQANSI (571 aa)) is domain II and I. N-linked (GlcNAc...) asparagine glycans are attached at residues Asn1593, Asn1610, Asn1696, Asn1806, Asn1897, Asn1912, Asn1916, Asn2013, Asn2024, Asn2041, Asn2122, and Asn2236. A coiled-coil region spans residues 1662-1863 (QDAERTNSRA…DIKTKLPPMS (202 aa)). Residues 1923–2146 (AYSNIKDYID…ANSIKVSVSS (224 aa)) adopt a coiled-coil conformation. 5 consecutive Laminin G-like domains span residues 2141-2324 (KVSV…CKGC), 2336-2517 (TIQF…TKGC), 2522-2706 (VYTV…IGRC), 2759-2930 (SKQF…VGTC), and 2929-3115 (TCFA…PVSC). Cys2298 and Cys2324 are disulfide-bonded. Residues Asn2356, Asn2431, and Asn2474 are each glycosylated (N-linked (GlcNAc...) asparagine). Residues Cys2491 and Cys2517 are joined by a disulfide bond. 3 N-linked (GlcNAc...) asparagine glycosylation sites follow: Asn2547, Asn2554, and Asn2644. A disulfide bond links Cys2679 and Cys2706. An N-linked (GlcNAc...) asparagine glycan is attached at Asn2889. Disulfide bonds link Cys2905–Cys2930 and Cys3083–Cys3115.

Laminin is a complex glycoprotein, consisting of three different polypeptide chains (alpha, beta, gamma), which are bound to each other by disulfide bonds into a cross-shaped molecule comprising one long and three short arms with globules at each end. Alpha-2 is a subunit of laminin-2 (laminin-211 or merosin), laminin-4 (laminin-221 or S-merosin) and laminin-12 (laminin-213). Interacts with FBLN1, FBLN2 and NID2.

It localises to the secreted. Its subcellular location is the extracellular space. The protein resides in the extracellular matrix. The protein localises to the basement membrane. In terms of biological role, binding to cells via a high affinity receptor, laminin is thought to mediate the attachment, migration and organization of cells into tissues during embryonic development by interacting with other extracellular matrix components. In Mus musculus (Mouse), this protein is Laminin subunit alpha-2 (Lama2).